The following is a 308-amino-acid chain: Ribosomal RNA small subunit methyltransferase H (308 aa).

Residues 38–40 (GGH), Asp58, Phe82, Asp99, and Gln106 contribute to the S-adenosyl-L-methionine site.

The protein belongs to the methyltransferase superfamily. RsmH family.

Its subcellular location is the cytoplasm. It carries out the reaction cytidine(1402) in 16S rRNA + S-adenosyl-L-methionine = N(4)-methylcytidine(1402) in 16S rRNA + S-adenosyl-L-homocysteine + H(+). Functionally, specifically methylates the N4 position of cytidine in position 1402 (C1402) of 16S rRNA. The sequence is that of Ribosomal RNA small subunit methyltransferase H from Acidovorax sp. (strain JS42).